An 89-amino-acid polypeptide reads, in one-letter code: Protein WFDC9 (89 aa).

A signal peptide spans 1–23; sequence MKPWILLLVMFISGVVMLLPVLG.

It is found in the secreted. This Homo sapiens (Human) protein is Protein WFDC9 (WFDC9).